The following is a 152-amino-acid chain: Small ribosomal subunit protein uS15 (152 aa).

Residues 1 to 11 (MAKMHTKRKGK) are compositionally biased toward basic residues. The tract at residues 1-24 (MAKMHTKRKGKSSSTRPNRTEPPE) is disordered.

The protein belongs to the universal ribosomal protein uS15 family. As to quaternary structure, part of the 30S ribosomal subunit.

In Methanosarcina mazei (strain ATCC BAA-159 / DSM 3647 / Goe1 / Go1 / JCM 11833 / OCM 88) (Methanosarcina frisia), this protein is Small ribosomal subunit protein uS15.